The chain runs to 351 residues: MPSAPTWPALITTLIEGRHLSVSESTWAMRQVMRGEATPAQLGGLLVALRASGETVDEIVGFRDAVLEEALPLDADPRALDIVGTGGDPYGAVLNISSVASVIAAAAGVPVIKHGNRGASSASGASDVLTALGVDLSITPERVAEVLRETGITYAHAALFHPGFRHAAATRRELGISTLFNVLGPLCNPARPEASAVGVADLSRVPLMVGVFRTRGATALVYRGDDGIDKLTTTGHSHIWEVSRGAVTEHDLDPLELGIPRAPIEALLGEGVEQNAEVIRRVLAGEPGPQRDVVLLNAAAGLEAFDLMGDPTRVQQPMARRLREKVAIAADAVDSGRAAAKLEEWAAATRA.

5-phospho-alpha-D-ribose 1-diphosphate-binding positions include glycine 84, glycine 87–aspartate 88, asparagine 95–serine 98, lysine 113–serine 121, and alanine 125. Glycine 84 lines the anthranilate pocket. A Mg(2+)-binding site is contributed by serine 97. Anthranilate is bound at residue asparagine 116. Arginine 171 contacts anthranilate. Residues aspartate 229 and lysine 230 each coordinate Mg(2+).

It belongs to the anthranilate phosphoribosyltransferase family. As to quaternary structure, homodimer. Mg(2+) serves as cofactor.

It catalyses the reaction N-(5-phospho-beta-D-ribosyl)anthranilate + diphosphate = 5-phospho-alpha-D-ribose 1-diphosphate + anthranilate. The protein operates within amino-acid biosynthesis; L-tryptophan biosynthesis; L-tryptophan from chorismate: step 2/5. Its function is as follows. Catalyzes the transfer of the phosphoribosyl group of 5-phosphorylribose-1-pyrophosphate (PRPP) to anthranilate to yield N-(5'-phosphoribosyl)-anthranilate (PRA). This Clavibacter michiganensis subsp. michiganensis (strain NCPPB 382) protein is Anthranilate phosphoribosyltransferase.